The following is a 400-amino-acid chain: MQELDIAGVGSVRVTRKNDNVVVIEKDLATEQMILAMGPQHPSTHGVLKLECLTDGEVITEAEPYLGYLHRCFEKSCEHVDYPAIVPYTDRLDYLASMNSEQAYAMAVEKLLDIEIPRRVEFIRVIVAELNRIASHLVAIGTYGIDLGAFTPFLFCFRDREIILGLLEWASGARMLYNYIWIGGLAYDVPSDFFKRVGEFVTYFRPKAVELCNLLTENEIFVKRTRGIGIMPADVAINYGWSGPMLRGSGVKWDLRRNDPYSVYPELDFSVPVPDGKVSVVGDCLSRHLVRAYEMDESLKIIEQCIDKMPTAEGFNPRSAIPKRIRPKAGEVYARAENPRGELGFYIMSDGKSTKPLRCKARSSCFVNLSAMKDLSKGQLIPDLVAIIGSIDIVLGEVDR.

It belongs to the complex I 49 kDa subunit family. In terms of assembly, NDH-1 is composed of 14 different subunits. Subunits NuoB, C, D, E, F, and G constitute the peripheral sector of the complex.

The protein resides in the cell inner membrane. It catalyses the reaction a quinone + NADH + 5 H(+)(in) = a quinol + NAD(+) + 4 H(+)(out). In terms of biological role, NDH-1 shuttles electrons from NADH, via FMN and iron-sulfur (Fe-S) centers, to quinones in the respiratory chain. The immediate electron acceptor for the enzyme in this species is believed to be a menaquinone. Couples the redox reaction to proton translocation (for every two electrons transferred, four hydrogen ions are translocated across the cytoplasmic membrane), and thus conserves the redox energy in a proton gradient. The sequence is that of NADH-quinone oxidoreductase subunit D from Pelodictyon phaeoclathratiforme (strain DSM 5477 / BU-1).